The following is a 321-amino-acid chain: tRNA pseudouridine synthase B (321 aa).

Residue Asp-47 is the Nucleophile of the active site.

This sequence belongs to the pseudouridine synthase TruB family. Type 1 subfamily.

The catalysed reaction is uridine(55) in tRNA = pseudouridine(55) in tRNA. Its function is as follows. Responsible for synthesis of pseudouridine from uracil-55 in the psi GC loop of transfer RNAs. The sequence is that of tRNA pseudouridine synthase B from Shewanella baltica (strain OS185).